The following is a 335-amino-acid chain: Transaldolase (335 aa).

Ser-2 bears the N-acetylserine mark. Lys-144 acts as the Schiff-base intermediate with substrate in catalysis.

It belongs to the transaldolase family. Type 1 subfamily. As to quaternary structure, homodimer.

The catalysed reaction is D-sedoheptulose 7-phosphate + D-glyceraldehyde 3-phosphate = D-erythrose 4-phosphate + beta-D-fructose 6-phosphate. Its pathway is carbohydrate degradation; pentose phosphate pathway; D-glyceraldehyde 3-phosphate and beta-D-fructose 6-phosphate from D-ribose 5-phosphate and D-xylulose 5-phosphate (non-oxidative stage): step 2/3. Transaldolase is important for the balance of metabolites in the pentose-phosphate pathway. This is Transaldolase (TAL1) from Saccharomyces cerevisiae (strain ATCC 204508 / S288c) (Baker's yeast).